The chain runs to 333 residues: Ornithine carbamoyltransferase (333 aa).

Carbamoyl phosphate is bound by residues 56 to 59 (STRT), Arg107, and 134 to 137 (HPTQ). L-ornithine contacts are provided by residues Asn167, Asp231, and 235 to 236 (SM). Residues 273–274 (CL) and Arg318 contribute to the carbamoyl phosphate site.

Belongs to the aspartate/ornithine carbamoyltransferase superfamily. OTCase family.

The protein localises to the cytoplasm. The enzyme catalyses carbamoyl phosphate + L-ornithine = L-citrulline + phosphate + H(+). The protein operates within amino-acid degradation; L-arginine degradation via ADI pathway; carbamoyl phosphate from L-arginine: step 2/2. Its function is as follows. Reversibly catalyzes the transfer of the carbamoyl group from carbamoyl phosphate (CP) to the N(epsilon) atom of ornithine (ORN) to produce L-citrulline. The chain is Ornithine carbamoyltransferase from Clostridium botulinum (strain Kyoto / Type A2).